The primary structure comprises 648 residues: Wilms tumor protein 1-interacting protein homolog (648 aa).

3 disordered regions span residues 27–56, 142–291, and 306–327; these read DGMY…KVYS, SNSL…SPRS, and SPRS…GSMS. Low complexity-rich tracts occupy residues 158–171 and 178–192; these read SPRS…SSQD and PRSS…LVSP. Composition is skewed to polar residues over residues 197–213 and 220–241; these read GTSV…TASD and PRTS…TSGI. Positions 252 to 267 are enriched in low complexity; that stretch reads PRSSTTSPRSSYSDSR. LIM zinc-binding domains follow at residues 437–498, 502–561, and 562–631; these read GICV…SGFQ, EKCF…TVFA, and PKCA…RLKT.

The protein belongs to the zyxin/ajuba family.

The protein localises to the cell junction. The protein resides in the adherens junction. It is found in the nucleus. In terms of biological role, may monitor slit diaphragm protein assembly, a specialized adherens junction characteristic of podocytes. In case of podocyte injury, it shuttles into the nucleus and acts as a transcription regulator. Plays a role in the regulation of cell morphology and cytoskeletal organization. Acts as a transcriptional corepressor for snai1 and snai2/slug and plays a role in regulating neural crest development. This chain is Wilms tumor protein 1-interacting protein homolog (wtip), found in Danio rerio (Zebrafish).